The following is a 185-amino-acid chain: Ribosome-recycling factor (185 aa).

Belongs to the RRF family.

Its subcellular location is the cytoplasm. Its function is as follows. Responsible for the release of ribosomes from messenger RNA at the termination of protein biosynthesis. May increase the efficiency of translation by recycling ribosomes from one round of translation to another. The sequence is that of Ribosome-recycling factor from Streptococcus gordonii (strain Challis / ATCC 35105 / BCRC 15272 / CH1 / DL1 / V288).